A 432-amino-acid polypeptide reads, in one-letter code: 3-phosphoshikimate 1-carboxyvinyltransferase (432 aa).

The 3-phosphoshikimate site is built by Lys-25, Ser-26, and Arg-30. Position 25 (Lys-25) interacts with phosphoenolpyruvate. Phosphoenolpyruvate-binding residues include Gly-97 and Arg-125. Residues Ser-170, Gln-172, Asp-318, and Lys-345 each contribute to the 3-phosphoshikimate site. Gln-172 contacts phosphoenolpyruvate. Asp-318 functions as the Proton acceptor in the catalytic mechanism. Phosphoenolpyruvate is bound by residues Arg-349 and Arg-393.

The protein belongs to the EPSP synthase family. Monomer.

The protein resides in the cytoplasm. The catalysed reaction is 3-phosphoshikimate + phosphoenolpyruvate = 5-O-(1-carboxyvinyl)-3-phosphoshikimate + phosphate. It participates in metabolic intermediate biosynthesis; chorismate biosynthesis; chorismate from D-erythrose 4-phosphate and phosphoenolpyruvate: step 6/7. In terms of biological role, catalyzes the transfer of the enolpyruvyl moiety of phosphoenolpyruvate (PEP) to the 5-hydroxyl of shikimate-3-phosphate (S3P) to produce enolpyruvyl shikimate-3-phosphate and inorganic phosphate. This Geobacillus thermodenitrificans (strain NG80-2) protein is 3-phosphoshikimate 1-carboxyvinyltransferase.